The sequence spans 399 residues: Putative gustatory receptor 59e (399 aa).

Over 1-33 (MDSSYWENLLLTINRFLGVYPSGRVGVLRWLHT) the chain is Cytoplasmic. Residues 34-54 (LWSLFLLMYIWTGSIVKCLEF) form a helical membrane-spanning segment. The Extracellular portion of the chain corresponds to 55 to 65 (TVEIPTIEKLL). A helical membrane pass occupies residues 66-86 (YLMEFPGNMATIAILVYYAVL). The Cytoplasmic portion of the chain corresponds to 87–120 (NRPLAHGAELQIERIITGLKGKAKRLVYKRHGQR). The chain crosses the membrane as a helical span at residues 121–141 (TLHLMATTLVFHGLCVLVDVV). Topologically, residues 142 to 206 (NYDFEFWTTW…RPPQGSTKLD (65 aa)) are extracellular. The chain crosses the membrane as a helical span at residues 207-227 (ACYESAFAVLVDAGGGSALMI). Over 228–250 (EEMRYTCNLIEQVHSQFLLRFGL) the chain is Cytoplasmic. A helical membrane pass occupies residues 251 to 271 (YLVLNLLNSLVSICVELYLIF). The Extracellular segment spans residues 272-282 (NFFETPLWEES). Residues 283–303 (VLLVYRLLWLAMHGGRIWFIL) form a helical membrane-spanning segment. The Cytoplasmic portion of the chain corresponds to 304–361 (SVNEQILEQKCNLCQLLNELEVCSSRLQRTINRFLLQLQRSIDQPLEACGIVTLDTRS). Residues 362-382 (LGGFIGVLMAIVIFLIQIGLG) form a helical membrane-spanning segment. N-linked (GlcNAc...) asparagine glycans are attached at residues asparagine 383 and asparagine 392. At 383–399 (NKSLMGVALNRSNWVYV) the chain is on the extracellular side.

It belongs to the insect chemoreceptor superfamily. Gustatory receptor (GR) family. Gr10a subfamily. As to expression, expressed in the adult labellar chemosensory neurons. In larvae, is expressed in neurons of the terminal external chemosensory organ.

Its subcellular location is the cell membrane. Probable gustatory receptor which mediates acceptance or avoidance behavior, depending on its substrates. The sequence is that of Putative gustatory receptor 59e (Gr59e) from Drosophila melanogaster (Fruit fly).